A 153-amino-acid polypeptide reads, in one-letter code: Prostaglandin E synthase (153 aa).

The Lumenal segment spans residues 1–13 (MPPPSLAMVSGQA). The chain crosses the membrane as a helical span at residues 14 to 42 (LPAFLLCSTLLVIKMYAVAVITGQVRLRK). R39 lines the glutathione pocket. Over 43 to 61 (KAFANPEDALRHGGLQFHR) the chain is Cytoplasmic. A helical membrane pass occupies residues 62–91 (DDQDVERCLRAHRNDMETIYPFLFLGLVYS). Position 74-78 (74-78 (RNDME)) interacts with glutathione. The Lumenal segment spans residues 92-96 (FLGPD). Residues 97–120 (PFVAQMHFLVFFLGRMVHTVAYLG) form a helical membrane-spanning segment. Glutathione contacts are provided by H114 and Y118. Over 121–124 (KLRA) the chain is Cytoplasmic. A helical membrane pass occupies residues 125-153 (PTRSLAYTVAQLPCASMALQIVWEAARHL). 127–131 (RSLAY) is a glutathione binding site.

The protein belongs to the MAPEG family. Homotrimer. Glutathione is required as a cofactor.

It is found in the membrane. Its subcellular location is the cytoplasm. It localises to the perinuclear region. The enzyme catalyses prostaglandin H2 = prostaglandin E2. It catalyses the reaction 2-glyceryl-prostaglandin H2 = 2-glyceryl-prostaglandin E2. It carries out the reaction prostaglandin G2 = (15S)-15-hydroperoxy-prostaglandin E2. The catalysed reaction is 1-chloro-2,4-dinitrobenzene + glutathione = 2,4-dinitrophenyl-S-glutathione + chloride + H(+). The enzyme catalyses (5S)-hydroperoxy-(6E,8Z,11Z,14Z)-eicosatetraenoate + 2 glutathione = (5S)-hydroxy-(6E,8Z,11Z,14Z)-eicosatetraenoate + glutathione disulfide + H2O. It participates in lipid metabolism; prostaglandin biosynthesis. Terminal enzyme of the cyclooxygenase (COX)-2-mediated prostaglandin E2 (PGE2) biosynthetic pathway. Catalyzes the glutathione-dependent oxidoreduction of prostaglandin endoperoxide H2 (PGH2) to prostaglandin E2 (PGE2) in response to inflammatory stimuli. Plays a key role in inflammation response, fever and pain. Also catalyzes the oxidoreduction of endocannabinoids into prostaglandin glycerol esters and PGG2 into 15-hydroperoxy-PGE2. In addition, displays low glutathione transferase and glutathione-dependent peroxidase activities, toward 1-chloro-2,4-dinitrobenzene and 5-hydroperoxyicosatetraenoic acid (5-HPETE), respectively. This is Prostaglandin E synthase (PTGES) from Equus caballus (Horse).